The sequence spans 113 residues: Large ribosomal subunit protein bL17 (113 aa).

This sequence belongs to the bacterial ribosomal protein bL17 family. Part of the 50S ribosomal subunit. Contacts protein L32.

This Syntrophomonas wolfei subsp. wolfei (strain DSM 2245B / Goettingen) protein is Large ribosomal subunit protein bL17.